Consider the following 583-residue polypeptide: Probable lysosomal cobalamin transporter (583 aa).

Transmembrane regions (helical) follow at residues 8–28 (LIWA…SVFI), 41–61 (VILT…LVPV), 95–115 (IVYY…IPFI), 145–165 (TVSF…VPVA), 188–208 (ALTF…VLYT), 312–332 (LLSG…MLLT), 347–367 (GYIL…VQSA), 375–395 (VIFT…ISAV), 418–438 (LLAT…TSMI), and 506–526 (FFGA…LLVM). Positions 541 to 552 (LDEDAEEAEEES) are enriched in acidic residues. A disordered region spans residues 541 to 562 (LDEDAEEAEEESLLANTRGRAE).

It belongs to the LIMR family. LMBRD1 subfamily.

The protein resides in the lysosome membrane. Probable lysosomal cobalamin transporter. Required to export cobalamin from lysosomes allowing its conversion to cofactors. This is Probable lysosomal cobalamin transporter from Aspergillus oryzae (strain ATCC 42149 / RIB 40) (Yellow koji mold).